The following is a 24-amino-acid chain: Flavin reductase (NADPH) (24 aa).

NADP(+) contacts are provided by Gly9, Thr11, Gly12, and Thr14.

The protein belongs to the BLVRB family. Monomer. As to expression, detected in erythrocytes (at protein level).

The protein resides in the cytoplasm. The catalysed reaction is reduced riboflavin + NADP(+) = riboflavin + NADPH + 2 H(+). It carries out the reaction bilirubin IXbeta + NADP(+) = biliverdin IXbeta + NADPH + H(+). The enzyme catalyses FMNH2 + NAD(+) = FMN + NADH + 2 H(+). It catalyses the reaction FMNH2 + NADP(+) = FMN + NADPH + 2 H(+). The catalysed reaction is S-nitroso-CoA + L-cysteinyl-[protein] = S-nitroso-L-cysteinyl-[protein] + CoA. It carries out the reaction L-cysteinyl-[SCAN] + S-nitroso-CoA = S-nitroso-L-cysteinyl-[SCAN] + CoA. The enzyme catalyses S-nitroso-L-cysteinyl-[SCAN] + L-cysteinyl-[protein] = L-cysteinyl-[SCAN] + S-nitroso-L-cysteinyl-[protein]. Enzyme that can both act as a NAD(P)H-dependent reductase and a S-nitroso-CoA-dependent nitrosyltransferase. Promotes fetal heme degradation during development. Also expressed in adult tissues, where it acts as a regulator of hematopoiesis, intermediary metabolism (glutaminolysis, glycolysis, TCA cycle and pentose phosphate pathway) and insulin signaling. Has a broad specificity oxidoreductase activity by catalyzing the NAD(P)H-dependent reduction of a variety of flavins, such as riboflavin, FAD or FMN, biliverdins, methemoglobin and PQQ (pyrroloquinoline quinone). Contributes to fetal heme catabolism by catalyzing reduction of biliverdin IXbeta into bilirubin IXbeta in the liver. Biliverdin IXbeta, which constitutes the major heme catabolite in the fetus is not present in adult. Does not reduce bilirubin IXalpha. Can also reduce the complexed Fe(3+) iron to Fe(2+) in the presence of FMN and NADPH. Acts as a protein nitrosyltransferase by catalyzing nitrosylation of cysteine residues of target proteins, such as HMOX2, INSR and IRS1. S-nitroso-CoA-dependent nitrosyltransferase activity is mediated via a 'ping-pong' mechanism: BLVRB first associates with both S-nitroso-CoA and protein substrate, nitric oxide group is then transferred from S-nitroso-CoA to Cys residues of BLVRB and from S-nitroso-BLVRB to the protein substrate. Inhibits insulin signaling by mediating nitrosylation of INSR and IRS1, leading to their inhibition. This is Flavin reductase (NADPH) (BLVRB) from Aquarana catesbeiana (American bullfrog).